The primary structure comprises 491 residues: Katanin p60 ATPase-containing subunit A1 (491 aa).

Positions 1 to 29 (MSLQMIVENVKLAREYALLGNYDSAMVYY) are interaction with KATNB1. Residues 1–75 (MSLQMIVENV…VKDIMKTLES (75 aa)) form an interaction with dynein and NDEL1 region. The interaction with microtubules; sufficient for microtubule severing activity stretch occupies residues 1–185 (MSLQMIVENV…EPEANKFDGT (185 aa)). Ser-42 carries the phosphoserine; by DYRK2 modification. A disordered region spans residues 101-182 (PVPVERRPLP…AVTEPEANKF (82 aa)). A compositionally biased stretch (basic and acidic residues) spans 145–169 (HNDRGKAVRSREKKEQSKGREEKNK). Residue 249-256 (GPPGTGKT) participates in ATP binding.

It belongs to the AAA ATPase family. Katanin p60 subunit A1 subfamily. Can homooligomerize into hexameric rings, which may be promoted by interaction with microtubules. Interacts with KATNB1, which may serve as a targeting subunit. Interacts with ASPM; the katanin complex formation KATNA1:KATNB1 is required for the association of ASPM. Interacts with dynein and NDEL1. Associates with the E3 ligase complex containing DYRK2, EDD/UBR5, DDB1 and DCAF1 proteins (EDVP complex). Interacts with KLHL42 (via the kelch domains). Interacts with CUL3; the interaction is enhanced by KLHL42. Interacts with KATNB1 and KATNBL1. Interacts with CAMSAP2 and CAMSAP3; leading to regulate the length of CAMSAP-decorated microtubule stretches. Phosphorylation by DYRK2 triggers ubiquitination and subsequent degradation. Post-translationally, ubiquitinated by the BCR(KLHL42) E3 ubiquitin ligase complex, leading to its proteasomal degradation. Ubiquitinated by the EDVP E3 ligase complex and subsequently targeted for proteasomal degradation.

The protein localises to the cytoplasm. Its subcellular location is the midbody. It is found in the cytoskeleton. It localises to the microtubule organizing center. The protein resides in the centrosome. The protein localises to the spindle pole. Its subcellular location is the spindle. It catalyses the reaction n ATP + n H2O + a microtubule = n ADP + n phosphate + (n+1) alpha/beta tubulin heterodimers.. With respect to regulation, ATPase activity is stimulated by microtubules, which promote homooligomerization. ATP-dependent microtubule severing is stimulated by interaction with KATNB1. Functionally, catalytic subunit of a complex which severs microtubules in an ATP-dependent manner. Microtubule severing may promote rapid reorganization of cellular microtubule arrays and the release of microtubules from the centrosome following nucleation. Microtubule release from the mitotic spindle poles may allow depolymerization of the microtubule end proximal to the spindle pole, leading to poleward microtubule flux and poleward motion of chromosome. The function in regulating microtubule dynamics at spindle poles seems to depend on the association of the katanin KATNA1:KATNB1 complex with ASPM which recruits it to microtubules. Reversely KATNA1:KATNB1 can enhance ASPM blocking activity on microtubule minus-end growth. Microtubule release within the cell body of neurons may be required for their transport into neuronal processes by microtubule-dependent motor proteins. This transport is required for axonal growth. The polypeptide is Katanin p60 ATPase-containing subunit A1 (Katna1) (Mus musculus (Mouse)).